Consider the following 239-residue polypeptide: Probable transcriptional regulatory protein Bcer98_0465 (239 aa).

The protein belongs to the TACO1 family. YeeN subfamily.

The protein localises to the cytoplasm. The polypeptide is Probable transcriptional regulatory protein Bcer98_0465 (Bacillus cytotoxicus (strain DSM 22905 / CIP 110041 / 391-98 / NVH 391-98)).